The chain runs to 427 residues: Forkhead box protein A1-B (427 aa).

Residues 157–251 (KPPYSYISLI…ENGCYLRRQK (95 aa)) constitute a DNA-binding region (fork-head). Positions 256–272 (EKTQGGKGNQDGRKDHS) are enriched in basic and acidic residues. The tract at residues 256 to 336 (EKTQGGKGNQ…HQNHSTHSLA (81 aa)) is disordered. Residues 285 to 302 (SSQMDSSSSMSNPSSSPQ) show a composition bias toward low complexity. The segment covering 323–334 (PLSSHQNHSTHS) has biased composition (polar residues).

Present in the vegetal pole and marginal zone but not the animal pole of gastrulae and in equal levels in the dorsal and ventral halves of both gastrulae and neurulae. At neurula stage, expressed in the notochord. During tailbud stages, expressed in the foregut, brain, hypocord, neural floor plate and in two lines of cells just dorsal and ventral to the notochord. Expressed in the adult liver.

It is found in the nucleus. Probable transcription factor. This is Forkhead box protein A1-B (foxa1-b) from Xenopus laevis (African clawed frog).